A 593-amino-acid polypeptide reads, in one-letter code: Cryptochrome-2 (593 aa).

The 130-residue stretch at 22–151 (ASSVHWFRKG…EVVTENSHTL (130 aa)) folds into the Photolyase/cryptochrome alpha/beta domain. Lys-30 is covalently cross-linked (Glycyl lysine isopeptide (Lys-Gly) (interchain with G-Cter in ubiquitin)). Phosphoserine is present on Ser-90. Residues Lys-126 and Lys-242 each participate in a glycyl lysine isopeptide (Lys-Gly) (interchain with G-Cter in ubiquitin) cross-link. At Ser-266 the chain carries Phosphoserine; by MAPK. An FAD-binding site is contributed by Ser-271. Residue Ser-299 is modified to Phosphoserine. Position 308 (Gln-308) interacts with FAD. A Glycyl lysine isopeptide (Lys-Gly) (interchain with G-Cter in ubiquitin) cross-link involves residue Lys-348. Residues His-374 and 406 to 408 (DAD) each bind FAD. The tract at residues 390-489 (WVSWESGVRV…IIGVDYPRPI (100 aa)) is required for inhibition of CLOCK-BMAL1-mediated transcription. Glycyl lysine isopeptide (Lys-Gly) (interchain with G-Cter in ubiquitin) cross-links involve residues Lys-475 and Lys-504. The interval 532 to 593 (PVAEPSSSQA…PTPELPSKDA (62 aa)) is disordered. Over residues 537 to 548 (SSSQAGSMSSAG) the composition is skewed to low complexity. Residue Ser-554 is modified to Phosphoserine; by GSK3-beta. Position 558 is a phosphoserine; by DYRK1A and MAPK (Ser-558).

Belongs to the DNA photolyase class-1 family. As to quaternary structure, component of the circadian core oscillator, which includes the CRY proteins, CLOCK or NPAS2, BMAL1 or BMAL2, CSNK1D and/or CSNK1E, TIMELESS, and the PER proteins. Interacts with TIMELESS. Interacts directly with PER1, PER2 and PER3; interaction with PER2 inhibits its ubiquitination and vice versa. Interacts with CLOCK-BMAL1. Interacts with CLOCK. Interacts with BMAL1. Interacts with NFIL3. Interacts with FBXL3. Interacts with FBXL21. FBXL3, PER2 and the cofactor FAD compete for overlapping binding sites. FBXL3 cannot bind CRY2 that interacts already with PER2 or that contains bound FAD. Interacts with PPP5C (via TPR repeats); the interaction down-regulates the PPP5C phosphatase activity on CSNK1E. Interacts with nuclear receptors AR and NR3C1/GR; the interaction is ligand dependent. Interacts with PRKDC and CIART. Interacts with ISCA1 (in vitro). Interacts with DDB1, USP7 and TARDBP. Interacts with HNF4A. Interacts with PPARA. Interacts with PPARD (via domain NR LBD) and NR1I2 (via domain NR LBD) in a ligand-dependent manner. Interacts with PPARG, NR1I3 and VDR in a ligand-dependent manner. FAD is required as a cofactor. It depends on (6R)-5,10-methylene-5,6,7,8-tetrahydrofolate as a cofactor. Post-translationally, phosphorylation on Ser-266 by MAPK is important for the inhibition of CLOCK-BMAL1-mediated transcriptional activity. Phosphorylation by CSKNE requires interaction with PER1 or PER2. Phosphorylated in a circadian manner at Ser-554 and Ser-558 in the suprachiasmatic nucleus (SCN) and liver. Phosphorylation at Ser-558 by DYRK1A promotes subsequent phosphorylation at Ser-554 by GSK3-beta: the two-step phosphorylation at the neighboring Ser residues leads to its proteasomal degradation. Ubiquitinated by the SCF(FBXL3) and SCF(FBXL21) complexes, regulating the balance between degradation and stabilization. The SCF(FBXL3) complex is mainly nuclear and mediates ubiquitination and subsequent degradation of CRY2. In contrast, cytoplasmic SCF(FBXL21) complex-mediated ubiquitination leads to stabilize CRY2 and counteract the activity of the SCF(FBXL3) complex. The SCF(FBXL3) and SCF(FBXL21) complexes probably mediate ubiquitination at different Lys residues. The SCF(FBXL3) complex recognizes and binds CRY2 phosphorylated at Ser-554 and Ser-558. Ubiquitination may be inhibited by PER2. Deubiquitinated by USP7. Expressed in all tissues examined including fetal brain, fibroblasts, heart, brain, placenta, lung, liver, skeletal muscle, kidney, pancreas, spleen, thymus, prostate, testis, ovary, small intestine, colon and leukocytes. Highest levels in heart and skeletal muscle.

The protein resides in the cytoplasm. It is found in the nucleus. KL001 (N-[3-(9H-carbazol-9-yl)-2-hydroxypropyl]-N-(2-furanylmethyl)-methanesulfonamide) binds to CRY1 and stabilizes it by inhibiting FBXL3- and ubiquitin-dependent degradation of CRY1 resulting in lengthening of the circadian periods. Functionally, transcriptional repressor which forms a core component of the circadian clock. The circadian clock, an internal time-keeping system, regulates various physiological processes through the generation of approximately 24 hour circadian rhythms in gene expression, which are translated into rhythms in metabolism and behavior. It is derived from the Latin roots 'circa' (about) and 'diem' (day) and acts as an important regulator of a wide array of physiological functions including metabolism, sleep, body temperature, blood pressure, endocrine, immune, cardiovascular, and renal function. Consists of two major components: the central clock, residing in the suprachiasmatic nucleus (SCN) of the brain, and the peripheral clocks that are present in nearly every tissue and organ system. Both the central and peripheral clocks can be reset by environmental cues, also known as Zeitgebers (German for 'timegivers'). The predominant Zeitgeber for the central clock is light, which is sensed by retina and signals directly to the SCN. The central clock entrains the peripheral clocks through neuronal and hormonal signals, body temperature and feeding-related cues, aligning all clocks with the external light/dark cycle. Circadian rhythms allow an organism to achieve temporal homeostasis with its environment at the molecular level by regulating gene expression to create a peak of protein expression once every 24 hours to control when a particular physiological process is most active with respect to the solar day. Transcription and translation of core clock components (CLOCK, NPAS2, BMAL1, BMAL2, PER1, PER2, PER3, CRY1 and CRY2) plays a critical role in rhythm generation, whereas delays imposed by post-translational modifications (PTMs) are important for determining the period (tau) of the rhythms (tau refers to the period of a rhythm and is the length, in time, of one complete cycle). A diurnal rhythm is synchronized with the day/night cycle, while the ultradian and infradian rhythms have a period shorter and longer than 24 hours, respectively. Disruptions in the circadian rhythms contribute to the pathology of cardiovascular diseases, cancer, metabolic syndromes and aging. A transcription/translation feedback loop (TTFL) forms the core of the molecular circadian clock mechanism. Transcription factors, CLOCK or NPAS2 and BMAL1 or BMAL2, form the positive limb of the feedback loop, act in the form of a heterodimer and activate the transcription of core clock genes and clock-controlled genes (involved in key metabolic processes), harboring E-box elements (5'-CACGTG-3') within their promoters. The core clock genes: PER1/2/3 and CRY1/2 which are transcriptional repressors form the negative limb of the feedback loop and interact with the CLOCK|NPAS2-BMAL1|BMAL2 heterodimer inhibiting its activity and thereby negatively regulating their own expression. This heterodimer also activates nuclear receptors NR1D1/2 and RORA/B/G, which form a second feedback loop and which activate and repress BMAL1 transcription, respectively. CRY1 and CRY2 have redundant functions but also differential and selective contributions at least in defining the pace of the SCN circadian clock and its circadian transcriptional outputs. Less potent transcriptional repressor in cerebellum and liver than CRY1, though less effective in lengthening the period of the SCN oscillator. Seems to play a critical role in tuning SCN circadian period by opposing the action of CRY1. With CRY1, dispensable for circadian rhythm generation but necessary for the development of intercellular networks for rhythm synchrony. May mediate circadian regulation of cAMP signaling and gluconeogenesis by blocking glucagon-mediated increases in intracellular cAMP concentrations and in CREB1 phosphorylation. Besides its role in the maintenance of the circadian clock, is also involved in the regulation of other processes. Plays a key role in glucose and lipid metabolism modulation, in part, through the transcriptional regulation of genes involved in these pathways, such as LEP or ACSL4. Represses glucocorticoid receptor NR3C1/GR-induced transcriptional activity by binding to glucocorticoid response elements (GREs). Represses the CLOCK-BMAL1 induced transcription of BHLHE40/DEC1. Represses the CLOCK-BMAL1 induced transcription of NAMPT. Represses PPARD and its target genes in the skeletal muscle and limits exercise capacity. Represses the transcriptional activity of NR1I2. This is Cryptochrome-2 (CRY2) from Homo sapiens (Human).